Reading from the N-terminus, the 195-residue chain is Protein LIGHT-DEPENDENT SHORT HYPOCOTYLS 4 (195 aa).

The span at 28-38 (TTTSSSSSSSS) shows a compositional bias: low complexity. Disordered regions lie at residues 28 to 51 (TTTS…RYEN) and 162 to 195 (SQAK…SSPN). In terms of domain architecture, ALOG spans 48-175 (RYENQKRRDW…ARGISYEKKK (128 aa)). The short motif at 173-177 (KKKRK) is the Nuclear localization signal element.

This sequence belongs to the plant homeotic and developmental regulators ALOG protein family. Induced by NAC054/CUC1 and NAC098/CUC2 in shoot organ boundary cells.

The protein localises to the nucleus. Probable transcription regulator that acts as a developmental regulator by promoting cell growth in response to light. May suppress organ differentiation in the boundary region. In Arabidopsis thaliana (Mouse-ear cress), this protein is Protein LIGHT-DEPENDENT SHORT HYPOCOTYLS 4 (LSH4).